A 309-amino-acid chain; its full sequence is tRNA dimethylallyltransferase (309 aa).

Gly10–Thr17 lines the ATP pocket. Thr12–Thr17 lines the substrate pocket. Interaction with substrate tRNA stretches follow at residues Asp35–Leu38 and Arg240–Arg245.

The protein belongs to the IPP transferase family. As to quaternary structure, monomer. Mg(2+) serves as cofactor.

The enzyme catalyses adenosine(37) in tRNA + dimethylallyl diphosphate = N(6)-dimethylallyladenosine(37) in tRNA + diphosphate. Catalyzes the transfer of a dimethylallyl group onto the adenine at position 37 in tRNAs that read codons beginning with uridine, leading to the formation of N6-(dimethylallyl)adenosine (i(6)A). The protein is tRNA dimethylallyltransferase of Baumannia cicadellinicola subsp. Homalodisca coagulata.